The chain runs to 415 residues: Lipid-A-disaccharide synthase (415 aa).

Positions 1–21 are disordered; sequence MNSLPESGSDGQSSADPSQKA.

This sequence belongs to the LpxB family.

It catalyses the reaction a lipid X + a UDP-2-N,3-O-bis[(3R)-3-hydroxyacyl]-alpha-D-glucosamine = a lipid A disaccharide + UDP + H(+). It participates in bacterial outer membrane biogenesis; LPS lipid A biosynthesis. In terms of biological role, condensation of UDP-2,3-diacylglucosamine and 2,3-diacylglucosamine-1-phosphate to form lipid A disaccharide, a precursor of lipid A, a phosphorylated glycolipid that anchors the lipopolysaccharide to the outer membrane of the cell. This is Lipid-A-disaccharide synthase from Gluconobacter oxydans (strain 621H) (Gluconobacter suboxydans).